The primary structure comprises 2076 residues: Protein Ycf2 (2076 aa).

Residue 1458 to 1465 coordinates ATP; it reads GSIGTGRS.

This sequence belongs to the Ycf2 family.

The protein localises to the plastid. It is found in the chloroplast stroma. Functionally, probable ATPase of unknown function. Its presence in a non-photosynthetic plant (Epifagus virginiana) and experiments in tobacco indicate that it has an essential function which is probably not related to photosynthesis. The protein is Protein Ycf2 of Acorus calamus (Sweet flag).